Reading from the N-terminus, the 941-residue chain is Translation initiation factor IF-2 (941 aa).

Disordered stretches follow at residues 61–204 and 249–274; these read IQSN…RREN and QEKD…KNNK. The span at 147-163 shows a compositional bias: basic and acidic residues; it reads EKAKQKLQEIQKSREAL. Over residues 164–179 the composition is skewed to low complexity; it reads NKLTQSNTNNANNANS. A compositionally biased stretch (basic and acidic residues) spans 180–204; the sequence is AKKEISEVAKQEREQEHLDNKRREN. The tr-type G domain maps to 440 to 609; the sequence is ERPPVVTIMG…LIQADIMELK (170 aa). A G1 region spans residues 449–456; it reads GHVDHGKT. 449-456 provides a ligand contact to GTP; it reads GHVDHGKT. Positions 474–478 are G2; the sequence is GITQH. Residues 495–498 are G3; the sequence is DTPG. Residues 495–499 and 549–552 contribute to the GTP site; these read DTPGH and NKMD. The interval 549–552 is G4; that stretch reads NKMD. Residues 585–587 are G5; the sequence is SAK.

The protein belongs to the TRAFAC class translation factor GTPase superfamily. Classic translation factor GTPase family. IF-2 subfamily.

It localises to the cytoplasm. Its function is as follows. One of the essential components for the initiation of protein synthesis. Protects formylmethionyl-tRNA from spontaneous hydrolysis and promotes its binding to the 30S ribosomal subunits. Also involved in the hydrolysis of GTP during the formation of the 70S ribosomal complex. This Helicobacter acinonychis (strain Sheeba) protein is Translation initiation factor IF-2.